We begin with the raw amino-acid sequence, 139 residues long: 6,7-dimethyl-8-ribityllumazine synthase (139 aa).

5-amino-6-(D-ribitylamino)uracil contacts are provided by residues phenylalanine 11, 42–44 (ALE), and 66–68 (VVI). A (2S)-2-hydroxy-3-oxobutyl phosphate-binding site is contributed by 71–72 (ET). The active-site Proton donor is the histidine 74. Position 98 (asparagine 98) interacts with 5-amino-6-(D-ribitylamino)uracil. Residue arginine 112 coordinates (2S)-2-hydroxy-3-oxobutyl phosphate.

The protein belongs to the DMRL synthase family.

The catalysed reaction is (2S)-2-hydroxy-3-oxobutyl phosphate + 5-amino-6-(D-ribitylamino)uracil = 6,7-dimethyl-8-(1-D-ribityl)lumazine + phosphate + 2 H2O + H(+). Its pathway is cofactor biosynthesis; riboflavin biosynthesis; riboflavin from 2-hydroxy-3-oxobutyl phosphate and 5-amino-6-(D-ribitylamino)uracil: step 1/2. Its function is as follows. Catalyzes the formation of 6,7-dimethyl-8-ribityllumazine by condensation of 5-amino-6-(D-ribitylamino)uracil with 3,4-dihydroxy-2-butanone 4-phosphate. This is the penultimate step in the biosynthesis of riboflavin. This chain is 6,7-dimethyl-8-ribityllumazine synthase, found in Novosphingobium aromaticivorans (strain ATCC 700278 / DSM 12444 / CCUG 56034 / CIP 105152 / NBRC 16084 / F199).